The sequence spans 258 residues: Imidazole glycerol phosphate synthase subunit HisF (258 aa).

Catalysis depends on residues aspartate 11 and aspartate 130.

The protein belongs to the HisA/HisF family. Heterodimer of HisH and HisF.

The protein resides in the cytoplasm. The catalysed reaction is 5-[(5-phospho-1-deoxy-D-ribulos-1-ylimino)methylamino]-1-(5-phospho-beta-D-ribosyl)imidazole-4-carboxamide + L-glutamine = D-erythro-1-(imidazol-4-yl)glycerol 3-phosphate + 5-amino-1-(5-phospho-beta-D-ribosyl)imidazole-4-carboxamide + L-glutamate + H(+). The protein operates within amino-acid biosynthesis; L-histidine biosynthesis; L-histidine from 5-phospho-alpha-D-ribose 1-diphosphate: step 5/9. Functionally, IGPS catalyzes the conversion of PRFAR and glutamine to IGP, AICAR and glutamate. The HisF subunit catalyzes the cyclization activity that produces IGP and AICAR from PRFAR using the ammonia provided by the HisH subunit. This is Imidazole glycerol phosphate synthase subunit HisF from Enterobacter sp. (strain 638).